A 307-amino-acid chain; its full sequence is Oxygen-dependent coproporphyrinogen-III oxidase (307 aa).

Substrate is bound at residue serine 94. A divalent metal cation-binding residues include histidine 98 and histidine 108. The Proton donor role is filled by histidine 108. Residue 110–112 participates in substrate binding; that stretch reads NVR. A divalent metal cation-binding residues include histidine 147 and histidine 177. The interval 242 to 277 is important for dimerization; it reads YVEFNLVWDRGTLFGLQSGGRTESILMSMPPLAQWQ. A substrate-binding site is contributed by 260 to 262; that stretch reads GGR.

The protein belongs to the aerobic coproporphyrinogen-III oxidase family. In terms of assembly, homodimer. The cofactor is a divalent metal cation.

It localises to the cytoplasm. The enzyme catalyses coproporphyrinogen III + O2 + 2 H(+) = protoporphyrinogen IX + 2 CO2 + 2 H2O. The protein operates within porphyrin-containing compound metabolism; protoporphyrin-IX biosynthesis; protoporphyrinogen-IX from coproporphyrinogen-III (O2 route): step 1/1. Functionally, involved in the heme biosynthesis. Catalyzes the aerobic oxidative decarboxylation of propionate groups of rings A and B of coproporphyrinogen-III to yield the vinyl groups in protoporphyrinogen-IX. This chain is Oxygen-dependent coproporphyrinogen-III oxidase, found in Chromohalobacter salexigens (strain ATCC BAA-138 / DSM 3043 / CIP 106854 / NCIMB 13768 / 1H11).